An 88-amino-acid chain; its full sequence is MAGTVASPEGITNPPIDDLLTAADSKYALVIYAAKRARQINAYYSQLGEGLLEYVGPLVETHVQEKALSVAMREINEGLLTSEPIEQQ.

This sequence belongs to the RNA polymerase subunit omega family. The RNAP catalytic core consists of 2 alpha, 1 beta, 1 beta' and 1 omega subunit. When a sigma factor is associated with the core the holoenzyme is formed, which can initiate transcription.

The catalysed reaction is RNA(n) + a ribonucleoside 5'-triphosphate = RNA(n+1) + diphosphate. Its function is as follows. Promotes RNA polymerase assembly. Latches the N- and C-terminal regions of the beta' subunit thereby facilitating its interaction with the beta and alpha subunits. This chain is DNA-directed RNA polymerase subunit omega, found in Kineococcus radiotolerans (strain ATCC BAA-149 / DSM 14245 / SRS30216).